Here is a 227-residue protein sequence, read N- to C-terminus: Cytochrome c oxidase subunit 2 (227 aa).

Residues 1–14 lie on the Mitochondrial intermembrane side of the membrane; sequence MAHSFQLGFQDATS. The helical transmembrane segment at 15 to 45 threads the bilayer; sequence PIMEELLHFHDHTLMIVFLISSLVLYIITLM. Topologically, residues 46–59 are mitochondrial matrix; the sequence is LTTKLTHTSTMDAQ. The chain crosses the membrane as a helical span at residues 60-87; it reads EVETVWTILPAIILILIALPSLRILYLM. The Mitochondrial intermembrane portion of the chain corresponds to 88-227; sequence DEINTPSLTV…HFENWSTSMI (140 aa). Cu cation-binding residues include H161, C196, E198, C200, H204, and M207. E198 is a binding site for Mg(2+).

It belongs to the cytochrome c oxidase subunit 2 family. As to quaternary structure, component of the cytochrome c oxidase (complex IV, CIV), a multisubunit enzyme composed of 14 subunits. The complex is composed of a catalytic core of 3 subunits MT-CO1, MT-CO2 and MT-CO3, encoded in the mitochondrial DNA, and 11 supernumerary subunits COX4I, COX5A, COX5B, COX6A, COX6B, COX6C, COX7A, COX7B, COX7C, COX8 and NDUFA4, which are encoded in the nuclear genome. The complex exists as a monomer or a dimer and forms supercomplexes (SCs) in the inner mitochondrial membrane with NADH-ubiquinone oxidoreductase (complex I, CI) and ubiquinol-cytochrome c oxidoreductase (cytochrome b-c1 complex, complex III, CIII), resulting in different assemblies (supercomplex SCI(1)III(2)IV(1) and megacomplex MCI(2)III(2)IV(2)). Found in a complex with TMEM177, COA6, COX18, COX20, SCO1 and SCO2. Interacts with TMEM177 in a COX20-dependent manner. Interacts with COX20. Interacts with COX16. It depends on Cu cation as a cofactor.

It localises to the mitochondrion inner membrane. It carries out the reaction 4 Fe(II)-[cytochrome c] + O2 + 8 H(+)(in) = 4 Fe(III)-[cytochrome c] + 2 H2O + 4 H(+)(out). Component of the cytochrome c oxidase, the last enzyme in the mitochondrial electron transport chain which drives oxidative phosphorylation. The respiratory chain contains 3 multisubunit complexes succinate dehydrogenase (complex II, CII), ubiquinol-cytochrome c oxidoreductase (cytochrome b-c1 complex, complex III, CIII) and cytochrome c oxidase (complex IV, CIV), that cooperate to transfer electrons derived from NADH and succinate to molecular oxygen, creating an electrochemical gradient over the inner membrane that drives transmembrane transport and the ATP synthase. Cytochrome c oxidase is the component of the respiratory chain that catalyzes the reduction of oxygen to water. Electrons originating from reduced cytochrome c in the intermembrane space (IMS) are transferred via the dinuclear copper A center (CU(A)) of subunit 2 and heme A of subunit 1 to the active site in subunit 1, a binuclear center (BNC) formed by heme A3 and copper B (CU(B)). The BNC reduces molecular oxygen to 2 water molecules using 4 electrons from cytochrome c in the IMS and 4 protons from the mitochondrial matrix. This chain is Cytochrome c oxidase subunit 2 (MT-CO2), found in Cephalopachus bancanus (Western tarsier).